Here is an 85-residue protein sequence, read N- to C-terminus: U4-theraphotoxin-Hhn1a (85 aa).

The signal sequence occupies residues 1 to 22 (MKVTLIAILTCAAVLVLHTTAA). Residues 23–48 (EELEAESQLMKVGMPDTELAAVDEER) constitute a propeptide that is removed on maturation. 3 cysteine pairs are disulfide-bonded: Cys-52–Cys-66, Cys-56–Cys-77, and Cys-71–Cys-82.

This sequence belongs to the neurotoxin 12 (Hwtx-2) family. 02 (Hwtx-2) subfamily. As to quaternary structure, monomer. Expressed by the venom gland.

It is found in the secreted. Neurotoxin active on both insects and mammals. The chain is U4-theraphotoxin-Hhn1a from Cyriopagopus hainanus (Chinese bird spider).